Here is a 156-residue protein sequence, read N- to C-terminus: MNVIGLDPGLNHTGWGILSIEKDIKLIGNGVIKTNNKETPGQRLNKIHKELINILNSYQINSASMEEVFINKNPRSSISLCYARGVLLLTLNAMNIQVFEYSSNYVKKSITGNGHAKKEQVHFMVEKILNVEFKGTYDISDAIAVALCHAYSKNNF.

Residues Asp-7, Glu-66, and Asp-138 contribute to the active site. Positions 7, 66, and 138 each coordinate Mg(2+).

The protein belongs to the RuvC family. Homodimer which binds Holliday junction (HJ) DNA. The HJ becomes 2-fold symmetrical on binding to RuvC with unstacked arms; it has a different conformation from HJ DNA in complex with RuvA. In the full resolvosome a probable DNA-RuvA(4)-RuvB(12)-RuvC(2) complex forms which resolves the HJ. Requires Mg(2+) as cofactor.

The protein localises to the cytoplasm. The catalysed reaction is Endonucleolytic cleavage at a junction such as a reciprocal single-stranded crossover between two homologous DNA duplexes (Holliday junction).. The RuvA-RuvB-RuvC complex processes Holliday junction (HJ) DNA during genetic recombination and DNA repair. Endonuclease that resolves HJ intermediates. Cleaves cruciform DNA by making single-stranded nicks across the HJ at symmetrical positions within the homologous arms, yielding a 5'-phosphate and a 3'-hydroxyl group; requires a central core of homology in the junction. The consensus cleavage sequence is 5'-(A/T)TT(C/G)-3'. Cleavage occurs on the 3'-side of the TT dinucleotide at the point of strand exchange. HJ branch migration catalyzed by RuvA-RuvB allows RuvC to scan DNA until it finds its consensus sequence, where it cleaves and resolves the cruciform DNA. The polypeptide is Crossover junction endodeoxyribonuclease RuvC (Ehrlichia canis (strain Jake)).